Here is a 2211-residue protein sequence, read N- to C-terminus: MASHAEPTRLFLFGDQTYDFVADLRDLLNIRNNPILVAFLEQSHHVIRAQMIRELPPKEHKQARTASLAELLQKYVDRKLPSAFQTALSCVTQIGLFMRQFDDPRVLYPHANDSYVLGVCTGSLAAAAISCSTSLSELLPIAVQTVLVAFRLGLWAEKVRDNLEISETNQTQPWSAVCHVPPEEVAIAIDRFSHKKVRSPVYRAQRPWITATSAKTTTVSASPDILSQLASQAPFTNSKLWREIPIYVPAHNNHLFSSRDVDDILATTNENPWSTFGAQIPFLSSVTGKLAWVRNYRDLLHLALSQCLIEPIRWDVVEAEVPRLLKDRDGLDTLTIVAFTTVLSKSLSNALVTEGIKPAEPPTSINKTPERYSHRPGSDRGKLAIVSMSGRFPEAPSTDSFWDLLYKGLDVCKEVPLRRWDVKTHVDPSGKARNKGATRWGCWLDFAGEFDPRFFSISPKEAPQMDPAQRMALMSTYEAMERGGIVPDTTPSTQRNRIGVFHGVTSNDWMETNTAQNIDTYFITGGNRGFIPGRINFCFEFSGPSYSNDTACSSSLAAIHLACNSLWRGDCDTAVAGGTNMIFTPDGHTGLDKGFFLSRTGNCKAFDDAADGYCRAEGVGTVFIKRLEDALAENDPILATILDIKTNHSAMSDSMTRPFKPAQIDNMSALLSTAGISPLDLSYIEMHGTGTQVGDAVEMESVLSLFAPDETFRPRDKPLYVGSAKANIGHGEGVSGVTSLIKVLLMMKNDTIPPHCGIKPGSRINRNYPDLPARNVHIAFEPKPWPRTDTPRRVLINNFSAAGGNTAVLVEDAPVRDPVTASDPRTSHIVTVSGHVGKSLKLNLEKLRDHLVKRPEINPSELSYTTTARRWHHPHRVSITGANTMEILRNVESAIARGHGVNRPATKPKIVIACSGQGSQYTGMGWQLYNSYPTFRSDLERFDQLARSYGFPSFLEVYTSKPVGDSMEDLLPVIVQLALVSLEMALGNLLGSFGLKPSAVIGHSLGEYAALYISGVLSAADTLYLVGMRAKLLQERCQRGTHAMLAVRASPVTLCEVLAESNCEVACHNGPNDTVLSGPLKEVMNLQNSLSATGIKGTLLKLPFAFHSAQVQPILEEFKNVARGVTFHKPQIPVLSPLLVKVIDEKGTVDPVYLARHCREPVKMVSVLEHARDQHIITDRTIVIDVGPKALMAGMIKTTLDKDTSSALPTLGPSLDVWKSLTNILGTLYSRGLDINWVAYHEPFGSAKKVIELPSYGWDLKDYFIPYKGEWCLHRHEIRCSCATPGKETATSDYQLPSDEQVAAKRPSKQDESKEAYPEIVATTTVHRVVEEKTEPLGATLVVETDISRPDVNQIAQGHLVDGIPLCTPSVYADIALHVGRYSMNRLRASHPGAMDGVVDVADMVIDKALIPHGKSPQLLRTTLTMTWPPKAAATTRSAKIKFATYFADGKLDTEHATCTVRFTSEAQLKSLQKKVPEYQERIKKLGEGLRQGQFIRYTTKSGYKLMSSMASFHRDYKLLNHLILNEADNEAVSTMDFSAAKSEGTFAAHPAYVDAITQVGGFAMNANDNTDIQQEVFVNHGWDSFQVYQPLVKGKTYEVYVRMTEDEKGDLVHGDTIVLYGDAVVAFFKGLSLRRVPRRGLRMVLQQASDKAARLHGNQQAVKTQAPQRAALKQKPQSSPTQPHASKVAYSRSATSPTAGKPVVAARDLSREGDDKFKAVLSVISEESGVALGELTADTNFADIGIDSLSSMVIGSRLREDLGLELGAEFSLFIDCPTVRSLKTLLSGSAVSVNNDKDELEPGQEAETAAPEQLDLRIGDAAPSKVRDANIEPLDLGDELFRNVLRIVSEESGVALDELSAETVFADIGIDSLSSMVITSRFREDLGMSLDSSFNLFEEVPTVARLQEFFGTTSGSTTGSSGSGSSEDETDSIPSTPEEYTTADTRVPECRPTTSVVLQGLPQMAKQILFMLPDGGGSASSYLTIPRLHADVAIVGLNCPYARDPENMNCTHQSMIQSFCNEIKRRQPEGPYHLGGWSSGGAFAYVTAEALINAGNEVHSLIIIDAPVPQVMEKLPTSFYEYCNNLGLFSNQPGGTTDGTAQPPPYLIPHFQATVDVMLDYRVAPLKTNRMPKVGIIWASETVMDEDNAPKMKGMHFMVQKRKDFGPDGWDVVCPGAVFDIVRAEGANHFTLMTKEHVYLVRELIDRVMG.

Residues 11–251 (FLFGDQTYDF…REIPIYVPAH (241 aa)) are starter unit:ACP transacylase (SAT) domain. The segment at 358–378 (PAEPPTSINKTPERYSHRPGS) is disordered. Residues 368-378 (TPERYSHRPGS) are compositionally biased toward basic and acidic residues. One can recognise a Ketosynthase family 3 (KS3) domain in the interval 380-812 (RGKLAIVSMS…GGNTAVLVED (433 aa)). Residues Cys-552, His-687, and His-730 each act as for beta-ketoacyl synthase activity in the active site. Residues 912 to 1201 (IACSGQGSQY…MAGMIKTTLD (290 aa)) are malonyl-CoA:ACP transacylase (MAT) domain. The active-site For acyl/malonyl transferase activity is Ser-1004. The interval 1289–1316 (TATSDYQLPSDEQVAAKRPSKQDESKEA) is disordered. Residues 1327 to 1468 (HRVVEEKTEP…CTVRFTSEAQ (142 aa)) form an N-terminal hotdog fold region. The 317-residue stretch at 1327–1643 (HRVVEEKTEP…LRRVPRRGLR (317 aa)) folds into the PKS/mFAS DH domain. A product template (PT) domain region spans residues 1340–1643 (TLVVETDISR…LRRVPRRGLR (304 aa)). The Proton acceptor; for dehydratase activity role is filled by His-1359. Residues 1495-1643 (FIRYTTKSGY…LRRVPRRGLR (149 aa)) form a C-terminal hotdog fold region. Asp-1555 (proton donor; for dehydratase activity) is an active-site residue. Residues 1655 to 1706 (RLHGNQQAVKTQAPQRAALKQKPQSSPTQPHASKVAYSRSATSPTAGKPVVA) are disordered. Composition is skewed to polar residues over residues 1658 to 1668 (GNQQAVKTQAP) and 1676 to 1685 (KPQSSPTQPH). Carrier domains are found at residues 1712–1791 (REGD…SGSA) and 1839–1915 (DELF…GTTS). Ser-1749 and Ser-1873 each carry O-(pantetheine 4'-phosphoryl)serine. A compositionally biased stretch (low complexity) spans 1912–1926 (GTTSGSTTGSSGSGS). The interval 1912 to 1947 (GTTSGSTTGSSGSGSSEDETDSIPSTPEEYTTADTR) is disordered. The span at 1934–1945 (IPSTPEEYTTAD) shows a compositional bias: polar residues. Positions 1969 to 2205 (ILFMLPDGGG…KEHVYLVREL (237 aa)) are thioesterase/Claisen cyclase (TE/CLC) domain. The active-site For thioesterase activity is Ser-2039.

Pantetheine 4'-phosphate is required as a cofactor.

The enzyme catalyses hexanoyl-[ACP] + 7 malonyl-CoA + 6 H(+) = noranthrone + holo-[ACP] + 7 CO2 + 7 CoA + 2 H2O. Its pathway is mycotoxin biosynthesis; sterigmatocystin biosynthesis. Functionally, non-reducing polyketide synthase; part of the gene cluster that mediates the biosynthesis of sterigmatocystin (ST), a polyketide-derived furanocoumarin which is part of the most toxic and carcinogenic compounds among the known mycotoxins. The first step in the biosynthesis of sterigmatocystin is the production of hexanoate by the fatty acid synthase (FAS) units stcJ and stcK. The polyketide backbone is assembled by the non-reducing polyketide synthase stcA by condensation of the starter hexanoyl-CoA and 7 malonyl-CoA extender units followed by cyclization and release of norsolorinic acid. Norsolorinic acid is the first stable intermediate in the biosynthesis of sterigmatocystin and is converted into averantin (AVN) by the ketoreductase stcE which reduces the hexanoate ketone to an alcohol. Averantin is then oxidized into 5'-hydroxyaverantin (HAVN) by the cytochrome P450 monooxygenase stcF. 5'-hydroxyaverantin is further converted to 5'-oxyaverantin (OAVN) by the 5'-hydroxyaverantin dehydrogenase stcG. The next step is the conversion of OAVN into averufin (AVF) which is catalyzed by a yet to be identified enzyme. The cytochrome P450 monooxygenase stcB and the flavin-binding monooxygenase stcW are both required for the conversion of averufin to 1-hydroxyversicolorone. The esterase stcI probably catalyzes the formation of versiconal hemiacetal acetate from 1-hydroxyversicolorone. The oxydoreductase stcN then probably catalyzes the biosynthetic step from versiconal to versicolorin B (VERB). The next step is performed by the versicolorin B desaturase stcL to produce versicolorin A (VERA). The ketoreductase stcU and the cytochrome P450 monooxygenase stcS are involved in the conversion of versicolorin A to demethylsterigmatocystin. The Baeyer-Villiger oxidas stcQ and the reductase stcR might be involved in the biosynthetic step from versicolorin A to demethylsterigmatocystin. The final step in the biosynthesis of sterigmatocystin is the methylation of demethylsterigmatocystin catalyzed by the methyltransferase stcP. This is Norsolorinic acid synthase stcA from Emericella nidulans (strain FGSC A4 / ATCC 38163 / CBS 112.46 / NRRL 194 / M139) (Aspergillus nidulans).